Reading from the N-terminus, the 206-residue chain is Large ribosomal subunit protein uL4 (206 aa).

Positions 47–75 are disordered; sequence GTQSAKTRAEVSGGGIKPWRQKGTGRARQ.

This sequence belongs to the universal ribosomal protein uL4 family. In terms of assembly, part of the 50S ribosomal subunit.

Functionally, one of the primary rRNA binding proteins, this protein initially binds near the 5'-end of the 23S rRNA. It is important during the early stages of 50S assembly. It makes multiple contacts with different domains of the 23S rRNA in the assembled 50S subunit and ribosome. Its function is as follows. Forms part of the polypeptide exit tunnel. The chain is Large ribosomal subunit protein uL4 from Clostridium botulinum (strain ATCC 19397 / Type A).